The chain runs to 210 residues: Large ribosomal subunit protein uL3 (210 aa).

This sequence belongs to the universal ribosomal protein uL3 family. In terms of assembly, part of the 50S ribosomal subunit. Forms a cluster with proteins L14 and L19.

One of the primary rRNA binding proteins, it binds directly near the 3'-end of the 23S rRNA, where it nucleates assembly of the 50S subunit. The protein is Large ribosomal subunit protein uL3 of Caldicellulosiruptor saccharolyticus (strain ATCC 43494 / DSM 8903 / Tp8T 6331).